The following is a 370-amino-acid chain: Homospermidine synthase 1 (370 aa).

This sequence belongs to the deoxyhypusine synthase family. In terms of assembly, homotetramer. It depends on NAD(+) as a cofactor. Post-translationally, the N-terminus is blocked. As to expression, expressed in roots.

The catalysed reaction is putrescine + spermidine = sym-homospermidine + propane-1,3-diamine. It functions in the pathway alkaloid biosynthesis; pyrrolizidine alkaloid biosynthesis. In terms of biological role, catalyzes the transfer of an aminobutyl unit from spermidine onto putrescine. The resulting polyamine homospermidine is a precursor in the biosynthesis of pyrrolizidine alkaloids. The chain is Homospermidine synthase 1 (HSS1) from Senecio vernalis (Spring groundsel).